The chain runs to 145 residues: 3-hydroxyacyl-[acyl-carrier-protein] dehydratase FabZ (145 aa).

H47 is a catalytic residue.

The protein belongs to the thioester dehydratase family. FabZ subfamily.

It is found in the cytoplasm. The catalysed reaction is a (3R)-hydroxyacyl-[ACP] = a (2E)-enoyl-[ACP] + H2O. Its function is as follows. Involved in unsaturated fatty acids biosynthesis. Catalyzes the dehydration of short chain beta-hydroxyacyl-ACPs and long chain saturated and unsaturated beta-hydroxyacyl-ACPs. This Ruthia magnifica subsp. Calyptogena magnifica protein is 3-hydroxyacyl-[acyl-carrier-protein] dehydratase FabZ.